We begin with the raw amino-acid sequence, 495 residues long: ATP-NADH kinase YEF1 (495 aa).

Positions 442-480 are disordered; sequence KYRLDSSKNGNDTISNPLESSCISSDAQDEERKSVTETE. The span at 448–467 shows a compositional bias: polar residues; sequence SKNGNDTISNPLESSCISSD.

This sequence belongs to the NAD kinase family. Homooctamer. Mg(2+) serves as cofactor. It depends on Mn(2+) as a cofactor. Requires Co(2+) as cofactor. The cofactor is Ca(2+).

It carries out the reaction NADH + ATP = ADP + NADPH + H(+). ATP-NADH kinase with a low phosphorylation activity of both NADH and NAD(+) to produce NADP and NADPH by using ATP. UTR1 is responsible for essentially all of the NAD/NADH kinase activity resident in the cytoplasm, whereas POS5 is responsible for all mitochondrial NAD/NADH kinase activity and consequent mitochondrial genome maintenance. YEF1 can substitute for UTR1 when overexpressed. The sequence is that of ATP-NADH kinase YEF1 (YEF1) from Saccharomyces cerevisiae (strain ATCC 204508 / S288c) (Baker's yeast).